We begin with the raw amino-acid sequence, 434 residues long: Prenyltransferase fogH (434 aa).

E86 lines the L-tryptophan pocket. Residues R101, R248, K250, Y252, and Y346 each contribute to the substrate site.

Belongs to the tryptophan dimethylallyltransferase family.

It functions in the pathway secondary metabolite biosynthesis. Its function is as follows. Prenyltransferase; part of the gene cluster that mediates the biosynthesis of flavoglaucin and congeners (including aspergin, dihydroauroglaucin and auroglaucin), prenylated salicylaldehyde derivatives carrying a saturated or an unsaturated C-7 side chain. The PKS fogA releases the carboxylic acid (8E,10E,12E)-3,5,7-trihydroxytetradeca-8,10,12-trienoic acid as its product, as well as derivatives with one and two double bonds. FogA is indeed able to reduce the initial triketide, thus being at least partially responsible for the differently saturated heptyl side chains of flavoglaucin congeners. The oxidoreductases fogB, fogC and fogD modify the nascent polyketide in fogA-bound form and, together, fogA, fogB, fogC and fogD are necessary for the formation of the aromatic core and the cyclized PKS products are released as salicyl alcohols. In particular, fogB is responsible for oxidation of a hydroxyl group or reduction of remaining double bond(s) at the C-7 residue whereas fogD is probably involved in the reductive release of the modified PKS products. The cytochrome P450 monooxygenase fogE is then responsible for the hydroxylation at C-3 of the benzene ring. The fogE products are substrates of the prenyltransferase fogH and the prenylated benzyl alcohols are subsequently oxidized by the fogF to produce the final aryl aldehydes flavoglaucin and congeners. The short-chain dehydrogenase fogG does not seem to be involved in the biosynthesis of the prenylated salicylaldehyde derivatives. The chain is Prenyltransferase fogH from Aspergillus ruber (strain CBS 135680).